Reading from the N-terminus, the 245-residue chain is Protein canopy homolog 4 (245 aa).

The N-terminal stretch at 1-27 (MCGLRFIMGPVRLEILLFILAAYGAWA) is a signal peptide. 3 disulfides stabilise this stretch: cysteine 44-cysteine 202, cysteine 47-cysteine 190, and cysteine 100-cysteine 162. Residues 207–245 (WTGKEKISDGQEEADDEEEEEEEEITKTSGNPKHDPEDL) form a disordered region. Positions 209–237 (GKEKISDGQEEADDEEEEEEEEITKTSGN) form a coiled coil. The span at 216 to 230 (GQEEADDEEEEEEEE) shows a compositional bias: acidic residues.

This sequence belongs to the canopy family. In terms of assembly, interacts with TLR4. Highly expressed in lung, spleen, thymus, and uterus. Moderately expressed in kidney, stomach and placenta. Weakly expressed in brain, heart, liver, small intestine, skeletal muscle and testis.

Its subcellular location is the secreted. In terms of biological role, plays a role in the regulation of the cell surface expression of TLR4. This chain is Protein canopy homolog 4 (Cnpy4), found in Mus musculus (Mouse).